Reading from the N-terminus, the 347-residue chain is KIN17-like protein KLP (347 aa).

The Nuclear localization signal (NLS) motif lies at 222-225 (KRKR).

It belongs to the KIN17 family.

The protein localises to the cytoplasm. The protein resides in the nucleus. Functionally, may act as repressor of root growth during copper excess and of hypocotyl growth in the dark. The protein is KIN17-like protein KLP of Arabidopsis thaliana (Mouse-ear cress).